A 41-amino-acid polypeptide reads, in one-letter code: uncharacterized protein (41 aa).

The helical transmembrane segment at 10-32 (LIILAVPFMIKTSLKTNLIFFFL) threads the bilayer.

It localises to the cell inner membrane. This is an uncharacterized protein from Escherichia coli (strain K12).